The sequence spans 95 residues: Aspartyl/glutamyl-tRNA(Asn/Gln) amidotransferase subunit C (95 aa).

This sequence belongs to the GatC family. As to quaternary structure, heterotrimer of A, B and C subunits.

The catalysed reaction is L-glutamyl-tRNA(Gln) + L-glutamine + ATP + H2O = L-glutaminyl-tRNA(Gln) + L-glutamate + ADP + phosphate + H(+). It catalyses the reaction L-aspartyl-tRNA(Asn) + L-glutamine + ATP + H2O = L-asparaginyl-tRNA(Asn) + L-glutamate + ADP + phosphate + 2 H(+). Functionally, allows the formation of correctly charged Asn-tRNA(Asn) or Gln-tRNA(Gln) through the transamidation of misacylated Asp-tRNA(Asn) or Glu-tRNA(Gln) in organisms which lack either or both of asparaginyl-tRNA or glutaminyl-tRNA synthetases. The reaction takes place in the presence of glutamine and ATP through an activated phospho-Asp-tRNA(Asn) or phospho-Glu-tRNA(Gln). The polypeptide is Aspartyl/glutamyl-tRNA(Asn/Gln) amidotransferase subunit C (Citrifermentans bemidjiense (strain ATCC BAA-1014 / DSM 16622 / JCM 12645 / Bem) (Geobacter bemidjiensis)).